The chain runs to 541 residues: Chaperonin GroEL (541 aa).

ATP is bound by residues 29–32 (TLGP), 86–90 (DGTTT), Gly-413, 478–480 (DAL), and Asp-494.

Belongs to the chaperonin (HSP60) family. In terms of assembly, forms a cylinder of 14 subunits composed of two heptameric rings stacked back-to-back. Interacts with the co-chaperonin GroES.

It is found in the cytoplasm. It catalyses the reaction ATP + H2O + a folded polypeptide = ADP + phosphate + an unfolded polypeptide.. In terms of biological role, together with its co-chaperonin GroES, plays an essential role in assisting protein folding. The GroEL-GroES system forms a nano-cage that allows encapsulation of the non-native substrate proteins and provides a physical environment optimized to promote and accelerate protein folding. The chain is Chaperonin GroEL from Alkaliphilus oremlandii (strain OhILAs) (Clostridium oremlandii (strain OhILAs)).